The following is a 121-amino-acid chain: Large ribosomal subunit protein uL18 (121 aa).

Belongs to the universal ribosomal protein uL18 family. In terms of assembly, part of the 50S ribosomal subunit; part of the 5S rRNA/L5/L18/L25 subcomplex. Contacts the 5S and 23S rRNAs.

Functionally, this is one of the proteins that bind and probably mediate the attachment of the 5S RNA into the large ribosomal subunit, where it forms part of the central protuberance. The protein is Large ribosomal subunit protein uL18 of Streptococcus equi subsp. zooepidemicus (strain MGCS10565).